Here is a 146-residue protein sequence, read N- to C-terminus: Hemoglobin subunit beta (146 aa).

V1 is subject to N-acetylvaline. Residues 2-146 (HLTDAEKALV…VATALAHKYH (145 aa)) form the Globin domain. The residue at position 12 (T12) is a Phosphothreonine. Position 44 is a phosphoserine (S44). N6-acetyllysine is present on K59. H63 provides a ligand contact to heme b. K82 bears the N6-acetyllysine mark. H92 contacts heme b. Residue C93 is modified to S-nitrosocysteine. K144 carries the N6-acetyllysine modification.

It belongs to the globin family. In terms of assembly, heterotetramer of two alpha chains and two beta chains. Red blood cells.

Involved in oxygen transport from the lung to the various peripheral tissues. This is Hemoglobin subunit beta from Peromyscus californicus (California mouse).